We begin with the raw amino-acid sequence, 221 residues long: GTP-binding nuclear protein Ran-2 (221 aa).

In terms of domain architecture, Small GTPase Ran-type spans 10-174; that stretch reads DYPSFKLVIV…LYLARKLAGD (165 aa). GTP is bound at residue 21–28; that stretch reads DGGTGKTT. Residues 40–48 form a switch-I region; it reads KKYEPTIGV. GTP contacts are provided by residues Gly-71, 125–128, and 153–155; these read NKVD and SAK. The tract at residues 71–87 is switch-II; that stretch reads GQEKFGGLRDGYYIHGQ.

Belongs to the small GTPase superfamily. Ran family. As to quaternary structure, found in a nuclear export complex with RanGTP, exportin and pre-miRNA.

It localises to the nucleus. GTP-binding protein involved in nucleocytoplasmic transport. Required for the import of protein into the nucleus and also for RNA export. Involved in chromatin condensation and control of cell cycle. The chain is GTP-binding nuclear protein Ran-2 (RAN2) from Oryza sativa subsp. indica (Rice).